Consider the following 345-residue polypeptide: Anthranilate phosphoribosyltransferase (345 aa).

5-phospho-alpha-D-ribose 1-diphosphate is bound by residues Gly-79, 82-83, Thr-87, 89-92, 106-114, and Ser-118; these read GD, NVST, and KHGNRAVSG. Residue Gly-79 participates in anthranilate binding. Position 91 (Ser-91) interacts with Mg(2+). Asn-109 contacts anthranilate. Position 164 (Arg-164) interacts with anthranilate. The Mg(2+) site is built by Asp-223 and Glu-224.

Belongs to the anthranilate phosphoribosyltransferase family. As to quaternary structure, homodimer. Mg(2+) serves as cofactor.

It carries out the reaction N-(5-phospho-beta-D-ribosyl)anthranilate + diphosphate = 5-phospho-alpha-D-ribose 1-diphosphate + anthranilate. Its pathway is amino-acid biosynthesis; L-tryptophan biosynthesis; L-tryptophan from chorismate: step 2/5. In terms of biological role, catalyzes the transfer of the phosphoribosyl group of 5-phosphorylribose-1-pyrophosphate (PRPP) to anthranilate to yield N-(5'-phosphoribosyl)-anthranilate (PRA). The protein is Anthranilate phosphoribosyltransferase of Saccharolobus islandicus (strain M.14.25 / Kamchatka #1) (Sulfolobus islandicus).